Consider the following 933-residue polypeptide: Isoleucine--tRNA ligase (933 aa).

The 'HIGH' region signature appears at proline 57–histidine 67. Glutamate 554 serves as a coordination point for L-isoleucyl-5'-AMP. A 'KMSKS' region motif is present at residues lysine 595–serine 599. Lysine 598 is an ATP binding site.

The protein belongs to the class-I aminoacyl-tRNA synthetase family. IleS type 1 subfamily. Monomer.

Its subcellular location is the cytoplasm. It carries out the reaction tRNA(Ile) + L-isoleucine + ATP = L-isoleucyl-tRNA(Ile) + AMP + diphosphate. Catalyzes the attachment of isoleucine to tRNA(Ile). As IleRS can inadvertently accommodate and process structurally similar amino acids such as valine, to avoid such errors it has two additional distinct tRNA(Ile)-dependent editing activities. One activity is designated as 'pretransfer' editing and involves the hydrolysis of activated Val-AMP. The other activity is designated 'posttransfer' editing and involves deacylation of mischarged Val-tRNA(Ile). The polypeptide is Isoleucine--tRNA ligase (Streptococcus pyogenes serotype M28 (strain MGAS6180)).